The sequence spans 395 residues: Guanine nucleotide-binding protein subunit beta-5b (395 aa).

WD repeat units lie at residues 103–142 (GHGN…KEHA), 145–184 (MPCT…NENL), 193–234 (MHTN…QSFH), 235–276 (GHSA…NVQS), 279–318 (THDS…EVAI), 320–362 (SKDS…RVAI), and 365–395 (GHEN…RIWA).

Belongs to the WD repeat G protein beta family. May interact with RGS9; this interaction stabilizes both proteins and increases RGS9 GTPase-activating protein (GAP) activity, hence accelerating the deactivation of D(2) dopamine receptor-mediated signaling.

It localises to the membrane. Enhances GTPase-activating protein (GAP) activity of regulator of G protein signaling (RGS) proteins, such as RGS7 and RGS9, hence involved in the termination of the signaling initiated by the G protein coupled receptors (GPCRs) by accelerating the GTP hydrolysis on the G-alpha subunits, thereby promoting their inactivation. Increases RGS7 GTPase-activating protein (GAP) activity, thereby regulating mood and cognition. Increases RGS9 GTPase-activating protein (GAP) activity, hence contributes to the deactivation of G protein signaling initiated by D(2) dopamine receptors. Along with gnb5a, plays an important role in neuronal signaling, including in the parasympathetic, but not sympathetic, control of heart rate. The sequence is that of Guanine nucleotide-binding protein subunit beta-5b from Danio rerio (Zebrafish).